A 639-amino-acid chain; its full sequence is MAQYEFQTEVSQLLTLIIHSLYSHKEIFLRELISNASDALDKLKYEALVDGTYKQLHCEARIDIAFEEDAQRLVVRDTGIGMNAEDLRANLGTIARSGTKAFLSTLTRDQKQDSNLIGQFGVGFYSAFMVASKVEVITKKAAENTVWKWTSEGQNAYTLDEVDAAAFPVLEGVAEGSAGTCVVLHLSQENSEFATRWRLEEVIKKYSDHIAFPIYLHYLQKEYDKDGAVTDTQKKVDQVNDAGALWKRPKSELKEEDYHRFYQTLTRDSTPPLLYVHTKAEGTQEYVTLFYVPAKAPFDLFHADYKPGVKLFVKRVFITDDEKELLPVYLRFVRGVIDSEDLPLNVSREILQQNRVLAAIKSASVKKLLGEFKRLAECDGKKYDEFITQYNRPLKEGLYSDYEHREQLLELVRFRTLSESVPEDGWTSFAEYVSRMKPDQKAIYYIAGNDDRVLRQSPHAESYRLQGFEVLVMSDDIDGIVMPSVSKYKEWELRAINRLGSEEELRPNEETDAAAQREQGFKPLLERLTHILSDSVKEVRLSKRLSDSVSCIVIDENDPTVQMERLMRATGQTHKSKIKPILEINASHTLVQKLKESTDEAFVEDLAFVLLDQALLIEGMDVGSSVDFVKRVNRLLARG.

The segment at 1 to 348 is a; substrate-binding; sequence MAQYEFQTEV…SEDLPLNVSR (348 aa). The b stretch occupies residues 349 to 565; that stretch reads EILQQNRVLA…ENDPTVQMER (217 aa). Positions 566–639 are c; sequence LMRATGQTHK…KRVNRLLARG (74 aa).

It belongs to the heat shock protein 90 family. Homodimer.

The protein resides in the cytoplasm. Its function is as follows. Molecular chaperone. Has ATPase activity. This Treponema pallidum (strain Nichols) protein is Chaperone protein HtpG.